Reading from the N-terminus, the 543-residue chain is CTP synthase (543 aa).

Residues 1–267 (MKQTKYIFVT…LSPIAEILDL (267 aa)) form an amidoligase domain region. Serine 15 contributes to the CTP binding site. Position 15 (serine 15) interacts with UTP. ATP-binding positions include 16–21 (SLGKGI) and aspartate 73. 2 residues coordinate Mg(2+): aspartate 73 and glutamate 141. CTP is bound by residues 148–150 (DIE), 188–193 (KTKPTQ), and lysine 224. UTP is bound by residues 188–193 (KTKPTQ) and lysine 224. The Glutamine amidotransferase type-1 domain occupies 292–543 (KIAFVGKYVD…IKAAINYEDN (252 aa)). Glycine 354 serves as a coordination point for L-glutamine. The Nucleophile; for glutamine hydrolysis role is filled by cysteine 381. Residues 382-385 (LGMQ), glutamate 405, and arginine 473 contribute to the L-glutamine site. Catalysis depends on residues histidine 516 and glutamate 518.

Belongs to the CTP synthase family. In terms of assembly, homotetramer.

The catalysed reaction is UTP + L-glutamine + ATP + H2O = CTP + L-glutamate + ADP + phosphate + 2 H(+). It catalyses the reaction L-glutamine + H2O = L-glutamate + NH4(+). It carries out the reaction UTP + NH4(+) + ATP = CTP + ADP + phosphate + 2 H(+). The protein operates within pyrimidine metabolism; CTP biosynthesis via de novo pathway; CTP from UDP: step 2/2. Its activity is regulated as follows. Allosterically activated by GTP, when glutamine is the substrate; GTP has no effect on the reaction when ammonia is the substrate. The allosteric effector GTP functions by stabilizing the protein conformation that binds the tetrahedral intermediate(s) formed during glutamine hydrolysis. Inhibited by the product CTP, via allosteric rather than competitive inhibition. Catalyzes the ATP-dependent amination of UTP to CTP with either L-glutamine or ammonia as the source of nitrogen. Regulates intracellular CTP levels through interactions with the four ribonucleotide triphosphates. The protein is CTP synthase of Campylobacter jejuni subsp. jejuni serotype O:23/36 (strain 81-176).